The primary structure comprises 396 residues: Probable intron-encoded endonuclease aI3 (396 aa).

The interval Thr-51–Thr-90 is disordered. Residues Asn-74–Thr-90 are compositionally biased toward low complexity.

This sequence belongs to the LAGLIDADG endonuclease family.

Its subcellular location is the mitochondrion. Its function is as follows. Mitochondrial DNA endonuclease involved in intron homing. This is Probable intron-encoded endonuclease aI3 (aI3) from Kluyveromyces lactis (strain ATCC 8585 / CBS 2359 / DSM 70799 / NBRC 1267 / NRRL Y-1140 / WM37) (Yeast).